The sequence spans 174 residues: VGHSELVGEIIRGVNVSALSRHKIMLPPRFSMVQVWPVRLPANHPLLTGQRRTALVANTSNMPVAAREASIYTGITLSEYFRWAEALREISGRLAEMPADSGYPAYLGARKHFPSVNWLISYSKALDEYYDKHFTEFVPLRTVGMLSNMISFYDMARIKADYAQLLEDMQNAFR.

Belongs to the ATPase alpha/beta chains family. As to quaternary structure, V-ATPase is a heteromultimeric enzyme made up of two complexes: the ATP-hydrolytic V1 complex and the proton translocation V0 complex. The V1 complex consists of three catalytic AB heterodimers that form a heterohexamer, three peripheral stalks each consisting of EG heterodimers, one central rotor including subunits D and F, and the regulatory subunits C and H. The proton translocation complex V0 consists of the proton transport subunit a, a ring of proteolipid subunits c9c'', rotary subunit d, subunits e and f, and the accessory subunits ATP6AP1/Ac45 and ATP6AP2/PRR. Interacts with the V0 complex V-ATPase subunit a4 ATP6V0A4. Interacts with WFS1. Interacts with alpha-crystallin B chain/CRYAB and with MTOR, forming a ternary complex.

Its subcellular location is the cytoplasm. It localises to the cytosol. The protein localises to the cytoplasmic vesicle. It is found in the secretory vesicle. The protein resides in the clathrin-coated vesicle membrane. Its subcellular location is the lysosome. It catalyses the reaction ATP + H2O + 4 H(+)(in) = ADP + phosphate + 5 H(+)(out). Its activity is regulated as follows. ATP hydrolysis occurs at the interface between the nucleotide-binding domains of subunits A and B. ATP hydrolysis triggers a conformational change in the subunits D and F, which induces a shift of subunit d. The c-ring is subsequently rotated and results in a continuous proton translocation across the membrane. Its function is as follows. Catalytic subunit of the V1 complex of vacuolar(H+)-ATPase (V-ATPase), a multisubunit enzyme composed of a peripheral complex (V1) that hydrolyzes ATP and a membrane integral complex (V0) that translocates protons. V-ATPase is responsible for acidifying and maintaining the pH of intracellular compartments and in some cell types, is targeted to the plasma membrane, where it is responsible for acidifying the extracellular environment. In aerobic conditions, involved in intracellular iron homeostasis, thus triggering the activity of Fe(2+) prolyl hydroxylase (PHD) enzymes, and leading to HIF1A hydroxylation and subsequent proteasomal degradation. May play a role in neurite development and synaptic connectivity. The polypeptide is V-type proton ATPase catalytic subunit A (Mesocricetus auratus (Golden hamster)).